We begin with the raw amino-acid sequence, 433 residues long: Enolase (433 aa).

(2R)-2-phosphoglycerate is bound at residue glutamine 167. The Proton donor role is filled by glutamate 209. The Mg(2+) site is built by aspartate 246, glutamate 291, and aspartate 318. Positions 343, 372, 373, and 394 each coordinate (2R)-2-phosphoglycerate. Lysine 343 functions as the Proton acceptor in the catalytic mechanism.

This sequence belongs to the enolase family. In terms of assembly, component of the RNA degradosome, a multiprotein complex involved in RNA processing and mRNA degradation. Mg(2+) is required as a cofactor.

Its subcellular location is the cytoplasm. The protein resides in the secreted. It is found in the cell surface. The enzyme catalyses (2R)-2-phosphoglycerate = phosphoenolpyruvate + H2O. Its pathway is carbohydrate degradation; glycolysis; pyruvate from D-glyceraldehyde 3-phosphate: step 4/5. Catalyzes the reversible conversion of 2-phosphoglycerate (2-PG) into phosphoenolpyruvate (PEP). It is essential for the degradation of carbohydrates via glycolysis. The protein is Enolase of Hamiltonella defensa subsp. Acyrthosiphon pisum (strain 5AT).